We begin with the raw amino-acid sequence, 120 residues long: Succinate dehydrogenase assembly factor 3, mitochondrial (120 aa).

The N-terminal 36 residues, Met1–Leu36, are a transit peptide targeting the mitochondrion.

This sequence belongs to the complex I LYR family. SDHAF3 subfamily. Interacts with SdhB within an SdhA-SdhB subcomplex.

The protein resides in the mitochondrion matrix. Its function is as follows. Plays an essential role in the assembly of succinate dehydrogenase (SDH), an enzyme complex (also referred to as respiratory complex II) that is a component of both the tricarboxylic acid (TCA) cycle and the mitochondrial electron transport chain, and which couples the oxidation of succinate to fumarate with the reduction of ubiquinone (coenzyme Q) to ubiquinol. Promotes maturation of the iron-sulfur protein subunit SdhB of the SDH catalytic dimer, protecting it from the deleterious effects of oxidants. The polypeptide is Succinate dehydrogenase assembly factor 3, mitochondrial (Drosophila melanogaster (Fruit fly)).